Reading from the N-terminus, the 681-residue chain is PTS system glucose-specific EIICBA component (681 aa).

The 412-residue stretch at 3–414 (KKLFGQLQRI…LKYKTPGRED (412 aa)) folds into the PTS EIIC type-1 domain. 10 helical membrane-spanning segments follow: residues 16-36 (LMLP…GTAI), 73-93 (MIFA…AAIA), 126-146 (ILGI…GALA), 170-190 (FVPI…ALIW), 199-219 (AFST…FGFI), 273-293 (FMQG…LAIY), 303-323 (VVAG…ITEP), 328-348 (FLFV…LSFL), 355-375 (VHLG…GVLP), and 383-403 (VIPV…FLIV). Residues 425–506 (TELPYAVLEA…QQIMNGQVVE (82 aa)) form the PTS EIIB type-1 domain. Cys447 serves as the catalytic Phosphocysteine intermediate; for EIIB activity. The 105-residue stretch at 551-655 (DQVFSEKMMG…SDITPIIVTQ (105 aa)) folds into the PTS EIIA type-1 domain. His603 serves as the catalytic Tele-phosphohistidine intermediate; for EIIA activity.

It localises to the cell membrane. It catalyses the reaction N(pros)-phospho-L-histidyl-[protein] + D-glucose(out) = D-glucose 6-phosphate(in) + L-histidyl-[protein]. Functionally, the phosphoenolpyruvate-dependent sugar phosphotransferase system (sugar PTS), a major carbohydrate active transport system, catalyzes the phosphorylation of incoming sugar substrates concomitantly with their translocation across the cell membrane. This system is involved in glucose transport. This Staphylococcus aureus (strain JH9) protein is PTS system glucose-specific EIICBA component (ptsG).